A 198-amino-acid chain; its full sequence is Snake venom metalloproteinase BpirMP (198 aa).

One can recognise a Peptidase M12B domain in the interval 1-197; the sequence is TYIEVAVVAD…HNPQCILNEP (197 aa). The Ca(2+) site is built by glutamate 4 and aspartate 88. Intrachain disulfides connect cysteine 112/cysteine 192, cysteine 152/cysteine 176, and cysteine 154/cysteine 159. Histidine 137 provides a ligand contact to Zn(2+). The active site involves glutamate 138. Residues histidine 141 and histidine 147 each contribute to the Zn(2+) site. Residues cysteine 192 and asparagine 195 each coordinate Ca(2+).

It belongs to the venom metalloproteinase (M12B) family. P-I subfamily. In terms of assembly, monomer. Requires Zn(2+) as cofactor. Expressed by the venom gland.

It is found in the secreted. Inhibited by the chelating agents EDTA, EGTA and 1,10-phenanthroline. Is not inhibited by serine proteinase inhibitors aprotinin, leupeptin and benzamidine. Its function is as follows. Zinc metalloprotease that preferentially degrades Aalpha chain of fibrinogen (FGA) (at a dose of 5 ug, whereas at a dose of 10 ug, both FGA and FGB are completely degraded). Degrades fibrin gel in a dose-dependent manner, as well blood clots formed in vitro (thrombolytic activity). Induces hemorrhage (in the dorsal skin of mice), with an MHD of 50 ug. The basal membrane components collagen (all chains of type IV) (COL4A4), fibronectin (FN1), laminin and nidogen are all degraded by this toxin. The sequence is that of Snake venom metalloproteinase BpirMP from Bothrops pirajai (Piraja's lancehead).